A 241-amino-acid chain; its full sequence is NADPH-dependent FMN reductase ArsH (241 aa).

FMN is bound at residue 43–50 (SLRTVSYS).

It belongs to the ArsH family. Homotetramer. It depends on FMN as a cofactor.

Its function is as follows. Has NADPH-dependent FMN reductase activity. No activity with NADH. May play a role in resistance to heavy metal toxicity. The protein is NADPH-dependent FMN reductase ArsH of Rhizobium meliloti (strain 1021) (Ensifer meliloti).